The sequence spans 1086 residues: Tudor domain-containing protein 7 (1086 aa).

HTH OST-type domains are found at residues 3 to 76 (EADL…YAVA) and 222 to 291 (KMDE…YPAR). A compositionally biased stretch (basic and acidic residues) spans 295–306 (PLKSDQDPEKEL). Residues 295–324 (PLKSDQDPEKELPPPPPAPKQEVPSQGSPA) form a disordered region. One can recognise an HTH OST-type 3 domain in the interval 325 to 394 (VMPDVKEKVA…TQKAILYAKL (70 aa)). Tudor domains follow at residues 501-558 (TVHV…FCSL) and 691-748 (LPFC…FLQE). Residues 844–866 (AASSPGNRNGGTPAPGSPAESLR) are disordered. Ser-847 carries the post-translational modification Phosphoserine. The tract at residues 849–1086 (GNRNGGTPAP…QYLLELSKVN (238 aa)) is interaction with CDK17. The interval 881 to 1086 (TSSFSLEELP…QYLLELSKVN (206 aa)) is interaction with CABLES1.

It belongs to the TDRD7 family. Found in a mRNP complex, at least composed of TDRD1, TDRD6, TDRD7 and DDX4. Found in a complex containing CABLES1, CDK16 and CDK17. Interacts with CABLES1, CDK17 and PIWIL1. In terms of tissue distribution, mainly expressed in testis. Expressed in spermatogonia, spermatocytes and round spermatids (at protein level). Also expressed in the developing lens.

Its subcellular location is the cytoplasm. In terms of biological role, component of specific cytoplasmic RNA granules involved in post-transcriptional regulation of specific genes: probably acts by binding to specific mRNAs and regulating their translation. Required for lens transparency during lens development, by regulating translation of genes such as CRYBB3 and HSPB1 in the developing lens. Also required during spermatogenesis. This Mus musculus (Mouse) protein is Tudor domain-containing protein 7 (Tdrd7).